The chain runs to 115 residues: U3-lycotoxin-Ls1r (115 aa).

A signal peptide spans 1–20; sequence MKFVLLFGVLLVTLFSYSSA. A propeptide spanning residues 21–44 is cleaved from the precursor; the sequence is EMLDDFHQADEDELVSLIKKEEAR. Disulfide bonds link cysteine 48–cysteine 63, cysteine 55–cysteine 72, cysteine 62–cysteine 87, and cysteine 74–cysteine 85.

Belongs to the neurotoxin 19 (CSTX) family. 01 subfamily. As to expression, expressed by the venom gland.

It is found in the secreted. The chain is U3-lycotoxin-Ls1r from Lycosa singoriensis (Wolf spider).